The sequence spans 448 residues: Probable tryptophanase (448 aa).

Lys253 carries the post-translational modification N6-(pyridoxal phosphate)lysine.

This sequence belongs to the beta-eliminating lyase family. Pyridoxal 5'-phosphate serves as cofactor.

The enzyme catalyses L-tryptophan + H2O = indole + pyruvate + NH4(+). The protein operates within amino-acid degradation; L-tryptophan degradation via pyruvate pathway; indole and pyruvate from L-tryptophan: step 1/1. In Halobacterium salinarum (strain ATCC 29341 / DSM 671 / R1), this protein is Probable tryptophanase.